Reading from the N-terminus, the 154-residue chain is uncharacterized protein (154 aa).

Residues His47, His127, and His131 each contribute to the a divalent metal cation site. Tyr150 carries the phosphotyrosine modification.

The protein belongs to the DinB family. As to quaternary structure, homodimer.

This is an uncharacterized protein from Bacillus subtilis (strain 168).